The following is a 502-amino-acid chain: ATP synthase subunit alpha (502 aa).

Residues 115 to 136 (VDGLGPIHTTKTRPIESPAPGV) form a disordered region. 169–176 (GDRQTGKT) serves as a coordination point for ATP.

This sequence belongs to the ATPase alpha/beta chains family. F-type ATPases have 2 components, CF(1) - the catalytic core - and CF(0) - the membrane proton channel. CF(1) has five subunits: alpha(3), beta(3), gamma(1), delta(1), epsilon(1). CF(0) has three main subunits: a(1), b(2) and c(9-12). The alpha and beta chains form an alternating ring which encloses part of the gamma chain. CF(1) is attached to CF(0) by a central stalk formed by the gamma and epsilon chains, while a peripheral stalk is formed by the delta and b chains.

It localises to the cell membrane. It carries out the reaction ATP + H2O + 4 H(+)(in) = ADP + phosphate + 5 H(+)(out). Functionally, produces ATP from ADP in the presence of a proton gradient across the membrane. The alpha chain is a regulatory subunit. The chain is ATP synthase subunit alpha from Bacillus cytotoxicus (strain DSM 22905 / CIP 110041 / 391-98 / NVH 391-98).